Here is a 957-residue protein sequence, read N- to C-terminus: Protein translocase subunit SecA (957 aa).

Residues Gln86, 104 to 108 (GEGKT), and Asp494 each bind ATP. The span at 929–947 (SRPAPAPTAAASPDPSSAS) shows a compositional bias: low complexity. The disordered stretch occupies residues 929 to 957 (SRPAPAPTAAASPDPSSASGVVEADFTEE).

It belongs to the SecA family. In terms of assembly, monomer and homodimer. Part of the essential Sec protein translocation apparatus which comprises SecA, SecYEG and auxiliary proteins SecDF. Other proteins may also be involved.

The protein localises to the cell inner membrane. The protein resides in the cellular thylakoid membrane. Its subcellular location is the cytoplasm. It carries out the reaction ATP + H2O + cellular proteinSide 1 = ADP + phosphate + cellular proteinSide 2.. Its function is as follows. Part of the Sec protein translocase complex. Interacts with the SecYEG preprotein conducting channel. Has a central role in coupling the hydrolysis of ATP to the transfer of proteins into and across the cell membrane, serving as an ATP-driven molecular motor driving the stepwise translocation of polypeptide chains across the membrane. In terms of biological role, probably participates in protein translocation into and across both the cytoplasmic and thylakoid membranes in cyanobacterial cells. This Synechococcus sp. (strain JA-2-3B'a(2-13)) (Cyanobacteria bacterium Yellowstone B-Prime) protein is Protein translocase subunit SecA.